Consider the following 840-residue polypeptide: DNA mismatch repair protein MutS (840 aa).

601–608 (GPNMSGKS) is an ATP binding site.

Belongs to the DNA mismatch repair MutS family.

Its function is as follows. This protein is involved in the repair of mismatches in DNA. It is possible that it carries out the mismatch recognition step. This protein has a weak ATPase activity. This is DNA mismatch repair protein MutS from Lactococcus lactis subsp. cremoris (strain MG1363).